We begin with the raw amino-acid sequence, 313 residues long: Dimethyladenosine transferase (313 aa).

The disordered stretch occupies residues 1–21 (MPKVKSGAIGRRRGRQEQRRE). S-adenosyl-L-methionine-binding residues include histidine 37, leucine 39, glycine 64, glutamate 85, aspartate 113, and asparagine 128.

This sequence belongs to the class I-like SAM-binding methyltransferase superfamily. rRNA adenine N(6)-methyltransferase family. As to quaternary structure, part of the small subunit (SSU) processome, composed of more than 70 proteins and the RNA chaperone small nucleolar RNA (snoRNA) U3.

It is found in the nucleus. Its subcellular location is the nucleoplasm. The protein resides in the nucleolus. It catalyses the reaction adenosine(1779)/adenosine(1780) in 18S rRNA + 4 S-adenosyl-L-methionine = N(6)-dimethyladenosine(1779)/N(6)-dimethyladenosine(1780) in 18S rRNA + 4 S-adenosyl-L-homocysteine + 4 H(+). Specifically dimethylates two adjacent adenosines in the loop of a conserved hairpin near the 3'-end of 18S rRNA in the 40S particle. Involved in the pre-rRNA processing steps leading to small-subunit rRNA production independently of its RNA-modifying catalytic activity. Part of the small subunit (SSU) processome, first precursor of the small eukaryotic ribosomal subunit. During the assembly of the SSU processome in the nucleolus, many ribosome biogenesis factors, an RNA chaperone and ribosomal proteins associate with the nascent pre-rRNA and work in concert to generate RNA folding, modifications, rearrangements and cleavage as well as targeted degradation of pre-ribosomal RNA by the RNA exosome. In Macaca fascicularis (Crab-eating macaque), this protein is Dimethyladenosine transferase (DIMT1).